The chain runs to 526 residues: Delayed-rectifier potassium channel regulatory subunit KCNS1 (526 aa).

Residues 1-217 (MLMLLVRGTH…LTMENPGYSL (217 aa)) are Cytoplasmic-facing. A helical transmembrane segment spans residues 218–239 (PSKLFSCVSISVVLASIAAMCI). Over 240–270 (HSLPEYQAREAAAAVAAVAAGRSPEGVRDDP) the chain is Extracellular. A helical transmembrane segment spans residues 271–293 (VLRRLEYFCIAWFSFEVSSRLLL). The Cytoplasmic segment spans residues 294 to 304 (APSTRNFFCHP). A helical membrane pass occupies residues 305 to 322 (LNLIDIVSVLPFYLTLLA). The Extracellular portion of the chain corresponds to 323-337 (GVALGDQGGKEFGHL). The chain crosses the membrane as a helical; Voltage-sensor span at residues 338–358 (GKVVQVFRLMRIFRVLKLARH). At 359 to 373 (STGLRSLGATLKHSY) the chain is on the cytoplasmic side. A helical transmembrane segment spans residues 374–395 (REVGILLLYLAVGVSVFSGVAY). The Extracellular segment spans residues 396-408 (TAEKEEDVGFNTI). The helical intramembrane region spans 409–420 (PACWWWGTVSMT). The short motif at 421-426 (TVGYGD) is the Selectivity filter element. An intramembrane segment occupies 421–428 (TVGYGDVV). Over 429–435 (PVTVAGK) the chain is Extracellular. A helical membrane pass occupies residues 436 to 464 (LAASGCILGGILVVALPITIIFNKFSHFY). Residues 465-526 (RRQKALEAAV…PSEPPHPQMY (62 aa)) are Cytoplasmic-facing. Residues 491–526 (GVSEASLETSRETSQEGRSADLESQAPSEPPHPQMY) are disordered. The span at 499–511 (TSRETSQEGRSAD) shows a compositional bias: basic and acidic residues.

The protein belongs to the potassium channel family. S (TC 1.A.1.2) subfamily. Kv9.1/KCNS1 sub-subfamily. As to quaternary structure, heterotetramer with KCNB1. Heterotetramer with KCNB2. Does not form homomultimers.

It is found in the cell membrane. Functionally, potassium channel regulatory subunit that modulate the delayed rectifier voltage-gated potassium channel activity of KCNB1 and KCNB2 by altering their kinetics, expression levels, and shifting the half-inactivation potential to more polarized values. While it does not form functional channels on its own, it can form functional heterotetrameric channels with KCNB1 and KCNB2. Each regulatory subunit has unique regulatory properties that can lead to extensive inhibition, significant changes in kinetics, and/or substantial shifts in the voltage dependencies of the inactivation process. In Pan troglodytes (Chimpanzee), this protein is Delayed-rectifier potassium channel regulatory subunit KCNS1.